A 121-amino-acid chain; its full sequence is Small ribosomal subunit protein uS13 (121 aa).

Residues 92-121 (HRMGLPCRGQKTKTNARTRKGPRRGAARRK) are disordered. A compositionally biased stretch (basic residues) spans 101–121 (QKTKTNARTRKGPRRGAARRK).

This sequence belongs to the universal ribosomal protein uS13 family. As to quaternary structure, part of the 30S ribosomal subunit. Forms a loose heterodimer with protein S19. Forms two bridges to the 50S subunit in the 70S ribosome.

Located at the top of the head of the 30S subunit, it contacts several helices of the 16S rRNA. In the 70S ribosome it contacts the 23S rRNA (bridge B1a) and protein L5 of the 50S subunit (bridge B1b), connecting the 2 subunits; these bridges are implicated in subunit movement. Contacts the tRNAs in the A and P-sites. This chain is Small ribosomal subunit protein uS13, found in Desulfotalea psychrophila (strain LSv54 / DSM 12343).